The following is a 500-amino-acid chain: Organic cation/carnitine transporter 7 (500 aa).

The Cytoplasmic portion of the chain corresponds to 1–23; it reads MADGNTRFTVDEALVAMGFGKFQ. A helical membrane pass occupies residues 24-44; it reads IYVLAYAGMGWVAEAMEMMLL. At 45–62 the chain is on the extracellular side; that stretch reads SFVGPAVQSLWNLSARQE. Asn56 carries N-linked (GlcNAc...) asparagine glycosylation. Residues 63–83 traverse the membrane as a helical segment; it reads SLITSVVFAGMLIGAYSWGIV. Over 84–97 the chain is Cytoplasmic; it reads SDKHGRRKGFIITA. The chain crosses the membrane as a helical span at residues 98–118; sequence VVTFVAGFLSAFSPNYMWLII. Topologically, residues 119–120 are extracellular; sequence LR. A helical transmembrane segment spans residues 121-141; that stretch reads CLVGLGLGGGPVLASWYLEFI. 137-144 provides a ligand contact to ATP; sequence YLEFIPAP. Residues 142-150 lie on the Cytoplasmic side of the membrane; that stretch reads PAPSRGTWM. Residues 151–171 form a helical membrane-spanning segment; it reads VVFSAFWTVGTIFEASLAWLV. The Extracellular portion of the chain corresponds to 172–174; sequence MPR. A helical transmembrane segment spans residues 175–195; it reads LGWRWLLAFSSVPSSLLLLFY. At 196 to 293 the chain is on the cytoplasmic side; it reads RWTSESPRYL…ALLSPTLMKR (98 aa). The helical transmembrane segment at 294–314 threads the bilayer; sequence TLLLWVVFFGNAFAYYGVVLL. The Extracellular segment spans residues 315–341; sequence TTELNNSHNRCYPTEKQLRNSNDVNYR. Asn319 is a glycosylation site (N-linked (GlcNAc...) asparagine). A helical membrane pass occupies residues 342–362; that stretch reads DVFIASFAEFPGLLISAAMVD. Over 363–367 the chain is Cytoplasmic; it reads RLGRK. Residues 368–387 traverse the membrane as a helical segment; it reads ASMASMLFTCCIFLLPLLSH. At 388 to 401 the chain is on the extracellular side; the sequence is QSPFITTVLLFGGR. Residues 402 to 422 form a helical membrane-spanning segment; that stretch reads ICISAAFTVVYIYAPEIYPTA. Residues 423-429 lie on the Cytoplasmic side of the membrane; sequence VRTTGVG. Residues 430 to 450 form a helical membrane-spanning segment; sequence VGSSVGRIGGILCPLVAVGLV. Residues 451-456 lie on the Extracellular side of the membrane; that stretch reads HGCHQT. The chain crosses the membrane as a helical span at residues 457 to 477; sequence IAVLLFEVVILVSGICVCLFP. Residues 478 to 500 lie on the Cytoplasmic side of the membrane; it reads FETSGRDLTDSISASKEPPSASV.

Belongs to the major facilitator (TC 2.A.1) superfamily. Organic cation transporter (TC 2.A.1.19) family. In terms of tissue distribution, expressed in pollen.

The protein localises to the membrane. In terms of biological role, high affinity carnitine transporter involved in the active cellular uptake of carnitine. Also transports organic cations. This chain is Organic cation/carnitine transporter 7 (OCT7), found in Arabidopsis thaliana (Mouse-ear cress).